The primary structure comprises 193 residues: CD70 antigen (193 aa).

Topologically, residues 1 to 17 (MPEEGSGCSVRRRPYGC) are cytoplasmic. The chain crosses the membrane as a helical; Signal-anchor for type II membrane protein span at residues 18 to 38 (VLRAALVPLVAGLVICLVVCI). Over 39-193 (QRFAQAQQQL…TFFGVQWVRP (155 aa)) the chain is Extracellular. A THD domain is found at 56–191 (DVAELQLNHT…DETFFGVQWV (136 aa)). Asparagine 63 carries an N-linked (GlcNAc...) asparagine glycan. 2 disulfides stabilise this stretch: cysteine 115–cysteine 151 and cysteine 133–cysteine 168. The N-linked (GlcNAc...) asparagine glycan is linked to asparagine 170.

The protein belongs to the tumor necrosis factor family. As to quaternary structure, homotrimer. Post-translationally, N-glycosylated.

The protein resides in the cell membrane. Its function is as follows. Expressed at the plasma membrane of B cells, it is the ligand of the CD27 receptor which is specifically expressed at the surface of T cells. The CD70-CD27 signaling pathway mediates antigen-specific T cell activation and expansion which in turn provides immune surveillance of B cells. This chain is CD70 antigen, found in Homo sapiens (Human).